The primary structure comprises 858 residues: Low-density lipoprotein receptor-related protein 12 (858 aa).

The signal sequence occupies residues 1–32; it reads MARRWSTKESQRRGSAWLLLFLAGVYGNGALA. The Extracellular portion of the chain corresponds to 33 to 492; that stretch reads ELSENVHISG…ENCPVIVPTR (460 aa). Cystine bridges form between cysteine 47/cysteine 76, cysteine 103/cysteine 122, cysteine 166/cysteine 178, cysteine 173/cysteine 191, cysteine 185/cysteine 200, cysteine 215/cysteine 232, cysteine 222/cysteine 245, cysteine 239/cysteine 254, and cysteine 259/cysteine 285. The CUB 1 domain occupies 47–159; sequence CGESPEQIRA…KGFRLAYFSG (113 aa). Asparagine 75 carries an N-linked (GlcNAc...) asparagine glycan. LDL-receptor class A domains are found at residues 165–201 and 214–255; these read DCACDQFRCGNGKCIPEAWKCNSMDECGDSSDEEVCA and PCAY…IDCD. The CUB 2 domain maps to 259-372; sequence CGQWLKYFYG…RGFNATYQVD (114 aa). N-linked (GlcNAc...) asparagine glycans are attached at residues asparagine 284 and asparagine 366. LDL-receptor class A domains lie at 374–411, 412–449, and 450–486; these read FCLPWEIPCGGNWGCYTEQQRCDGYWHCPNGRDEINCT, MCQKEEFPCSRNGVCYPRSDRCNYQNHCPNGSDEKNCF, and FCQPGNFHCKNNRCVFESWVCDSQDDCGDGSDEENCP. 9 disulfide bridges follow: cysteine 375–cysteine 388, cysteine 382–cysteine 401, cysteine 395–cysteine 410, cysteine 413–cysteine 426, cysteine 420–cysteine 439, cysteine 433–cysteine 448, cysteine 451–cysteine 463, cysteine 458–cysteine 476, and cysteine 470–cysteine 485. N-linked (GlcNAc...) asparagine glycosylation occurs at asparagine 409. Asparagine 441 carries an N-linked (GlcNAc...) asparagine glycan. Residues 493–513 traverse the membrane as a helical segment; it reads VITAAVIGSLICGLLLVIALG. Topologically, residues 514-858 are cytoplasmic; the sequence is CTCKLYSLRM…TSDDEALLLC (345 aa). Disordered regions lie at residues 619–721 and 746–767; these read ALVS…VSPA and SSSTTQNRSPLRQLDTAVSGRE. The segment covering 712 to 721 has biased composition (low complexity); the sequence is SVEAPSVSPA. The span at 746–755 shows a compositional bias: polar residues; that stretch reads SSSTTQNRSP.

The protein belongs to the LDLR family. In terms of assembly, may interact with RACK1, ZFYVE9 and NMRK2.

It localises to the membrane. Its subcellular location is the coated pit. In terms of biological role, probable receptor, which may be involved in the internalization of lipophilic molecules and/or signal transduction. May act as a tumor suppressor. This Mus musculus (Mouse) protein is Low-density lipoprotein receptor-related protein 12 (Lrp12).